The sequence spans 507 residues: ATP synthase subunit alpha, chloroplastic (507 aa).

An ATP-binding site is contributed by 170–177 (GDRQTGKT).

The protein belongs to the ATPase alpha/beta chains family. As to quaternary structure, F-type ATPases have 2 components, CF(1) - the catalytic core - and CF(0) - the membrane proton channel. CF(1) has five subunits: alpha(3), beta(3), gamma(1), delta(1), epsilon(1). CF(0) has four main subunits: a, b, b' and c.

Its subcellular location is the plastid. The protein localises to the chloroplast thylakoid membrane. The enzyme catalyses ATP + H2O + 4 H(+)(in) = ADP + phosphate + 5 H(+)(out). Its function is as follows. Produces ATP from ADP in the presence of a proton gradient across the membrane. The alpha chain is a regulatory subunit. This is ATP synthase subunit alpha, chloroplastic from Phalaenopsis aphrodite subsp. formosana (Moth orchid).